Reading from the N-terminus, the 166-residue chain is Phosphopantetheine adenylyltransferase (166 aa).

Serine 11 contacts substrate. ATP is bound by residues 11 to 12 and histidine 19; that span reads SF. Residues lysine 43, alanine 76, and arginine 90 each contribute to the substrate site. Residues 91 to 93, glutamate 101, and 126 to 132 contribute to the ATP site; these read GLR and LQPVSSS.

Belongs to the bacterial CoaD family. In terms of assembly, homohexamer. Mg(2+) serves as cofactor.

The protein resides in the cytoplasm. It carries out the reaction (R)-4'-phosphopantetheine + ATP + H(+) = 3'-dephospho-CoA + diphosphate. It functions in the pathway cofactor biosynthesis; coenzyme A biosynthesis; CoA from (R)-pantothenate: step 4/5. Functionally, reversibly transfers an adenylyl group from ATP to 4'-phosphopantetheine, yielding dephospho-CoA (dPCoA) and pyrophosphate. The chain is Phosphopantetheine adenylyltransferase from Streptococcus equi subsp. equi (strain 4047).